Consider the following 25-residue polypeptide: Small ribosomal subunit protein eS32 (25 aa).

A disordered region spans residues 1-25; sequence MRAKWRKKRMRRLKRKRRKMRARSK.

Belongs to the eukaryotic ribosomal protein eS32 family. Component of the small ribosomal subunit.

This chain is Small ribosomal subunit protein eS32 (RpL41), found in Spodoptera frugiperda (Fall armyworm).